The following is a 932-amino-acid chain: Serotype-specific antigen 1 (932 aa).

The first 24 residues, 1–24, serve as a signal peptide directing secretion; sequence MYKIKHSFNKTLIAISISSFLSIA. Positions 25–407 constitute a Peptidase S8 domain; it reads YATESIENPQ…WGLINLKKAV (383 aa). Catalysis depends on charge relay system residues Asp58, His116, and Ser351. The 264-residue stretch at 669 to 932 folds into the Autotransporter domain; sequence HTPLQTTVWA…PIWLESKCWL (264 aa).

Belongs to the peptidase S8 family.

It is found in the cell outer membrane. This Mannheimia haemolytica (Pasteurella haemolytica) protein is Serotype-specific antigen 1 (ssa1).